The chain runs to 252 residues: Zinc finger protein 511 (252 aa).

3 consecutive C2H2-type zinc fingers follow at residues 80–105 (FACQ…HTLH), 107–130 (NVCS…LEWH), and 144–169 (YQCL…VRMH). Positions 177–221 (FDKPKKSRSPASAEAPGDSGERSEGEAMEICSEPVAASPAPAGER) are disordered. Arginine 240 is subject to Omega-N-methylarginine.

This sequence belongs to the krueppel C2H2-type zinc-finger protein family.

Its subcellular location is the nucleus. Functionally, may be involved in transcriptional regulation. This Homo sapiens (Human) protein is Zinc finger protein 511.